Consider the following 41-residue polypeptide: Hadrurin (41 aa).

The protein belongs to the non-disulfide-bridged peptide (NDBP) superfamily. Long chain multifunctional peptide (group 2) family. Expressed by the venom gland.

The protein localises to the secreted. Functionally, antimicrobial activity against S.typhimurium, K.pneumoniae, E.cloacae, P.aeruginosa, E.coli and S.marcescens. Also shows hemolytic activity when tested in human erythrocytes. The chain is Hadrurin from Hoffmannihadrurus aztecus (Mexican scorpion).